Consider the following 468-residue polypeptide: uncharacterized protein (468 aa).

An N-terminal signal peptide occupies residues 1–19 (MRVLSVLLVALTVAGSAYS). N-linked (GlcNAc...) asparagine glycosylation is found at N86 and N334. The interval 401 to 421 (NPSTNLPETSPPTEQPTAPPA) is disordered. Positions 409–421 (TSPPTEQPTAPPA) are enriched in pro residues. N435 carries N-linked (GlcNAc...) asparagine glycosylation. N444 is lipidated: GPI-like-anchor amidated asparagine. The propeptide at 445 to 468 (SASSIEMSKLVVAILSLFILAFFH) is removed in mature form.

The protein resides in the cell membrane. This is an uncharacterized protein from Dictyostelium discoideum (Social amoeba).